Here is a 115-residue protein sequence, read N- to C-terminus: Dolichyl-diphosphooligosaccharide--protein glycosyltransferase subunit DAD1 (115 aa).

Topologically, residues 1–31 (MVKSTSKDAQDLFRSLRSAYSATPTNLKIID) are cytoplasmic. The chain crosses the membrane as a helical span at residues 32-52 (LYVVFAVFTALIQVVYMALVG). Residues 53–55 (SFP) lie on the Lumenal side of the membrane. A helical membrane pass occupies residues 56–76 (FNSFLSGVLSCIGTAVLAVCL). At 77–94 (RIQVNKENKEFKDLAPER) the chain is on the cytoplasmic side. The helical transmembrane segment at 95-115 (AFADFVLCNLVLHLVIINFLG) threads the bilayer.

It belongs to the DAD/OST2 family. In terms of assembly, component of the oligosaccharyltransferase (OST) complex. In terms of tissue distribution, ubiquitous.

The protein localises to the endoplasmic reticulum membrane. Its pathway is protein modification; protein glycosylation. Its function is as follows. Subunit of the oligosaccharyl transferase (OST) complex that catalyzes the initial transfer of a defined glycan (Glc(3)Man(9)GlcNAc(2) in eukaryotes) from the lipid carrier dolichol-pyrophosphate to an asparagine residue within an Asn-X-Ser/Thr consensus motif in nascent polypeptide chains, the first step in protein N-glycosylation. N-glycosylation occurs cotranslationally and the complex associates with the Sec61 complex at the channel-forming translocon complex that mediates protein translocation across the endoplasmic reticulum (ER). All subunits are required for a maximal enzyme activity. In Arabidopsis thaliana (Mouse-ear cress), this protein is Dolichyl-diphosphooligosaccharide--protein glycosyltransferase subunit DAD1 (DAD1).